The following is a 497-amino-acid chain: 3-octaprenyl-4-hydroxybenzoate carboxy-lyase (497 aa).

Residue Asn175 participates in Mn(2+) binding. Residues 178 to 180 (IYR), 192 to 194 (RWL), and 197 to 198 (RG) each bind prenylated FMN. Glu241 contributes to the Mn(2+) binding site. Asp290 (proton donor) is an active-site residue.

This sequence belongs to the UbiD family. Homohexamer. It depends on prenylated FMN as a cofactor. The cofactor is Mn(2+).

Its subcellular location is the cell membrane. It carries out the reaction a 4-hydroxy-3-(all-trans-polyprenyl)benzoate + H(+) = a 2-(all-trans-polyprenyl)phenol + CO2. The protein operates within cofactor biosynthesis; ubiquinone biosynthesis. Catalyzes the decarboxylation of 3-octaprenyl-4-hydroxy benzoate to 2-octaprenylphenol, an intermediate step in ubiquinone biosynthesis. This is 3-octaprenyl-4-hydroxybenzoate carboxy-lyase from Escherichia coli O157:H7.